The chain runs to 209 residues: Ribulose-phosphate 3-epimerase (209 aa).

Residue serine 8 coordinates substrate. 4 residues coordinate a divalent metal cation: histidine 33, aspartate 35, histidine 64, and aspartate 170. Aspartate 35 functions as the Proton acceptor in the catalytic mechanism. Residues histidine 64, 170–172 (DGG), and 191–192 (GS) contribute to the substrate site. Residue aspartate 170 is the Proton donor of the active site.

Belongs to the ribulose-phosphate 3-epimerase family. A divalent metal cation serves as cofactor.

The catalysed reaction is D-ribulose 5-phosphate = D-xylulose 5-phosphate. It functions in the pathway carbohydrate degradation. Functionally, catalyzes the reversible epimerization of D-ribulose 5-phosphate to D-xylulose 5-phosphate. The polypeptide is Ribulose-phosphate 3-epimerase (Mycoplasma genitalium (strain ATCC 33530 / DSM 19775 / NCTC 10195 / G37) (Mycoplasmoides genitalium)).